Consider the following 446-residue polypeptide: Tripartite motif-containing protein 43B (446 aa).

An RING-type zinc finger spans residues 15–56 (CVICLNYLVDPVTICCGHSFCRPCLCLSWEEAQSPANCPACR). Residues 88–129 (SEKQICGTHRQTKKMFCDMDKSLLCLLCSNSQEHGAHKHYPI) form a B box-type zinc finger. Positions 93, 96, 115, and 121 each coordinate Zn(2+). 2 coiled-coil regions span residues 129–158 (IEEAAEEDREKLLKQMRILWKKIQENQRNL) and 190–220 (LHKEEKQHLERLNKEYQEIFQQLQRSWVKMD). The region spanning 269–446 (ELTAGPITGL…VRPFFYTGHR (178 aa)) is the B30.2/SPRY domain.

The protein belongs to the TRIM/RBCC family.

This chain is Tripartite motif-containing protein 43B (TRIM43B), found in Homo sapiens (Human).